A 178-amino-acid polypeptide reads, in one-letter code: Inorganic pyrophosphatase (178 aa).

Lys-30, Arg-44, and Tyr-56 together coordinate substrate. Asp-66, Asp-71, and Asp-103 together coordinate Mg(2+). Tyr-142 is a binding site for substrate.

The protein belongs to the PPase family. As to quaternary structure, homohexamer. It depends on Mg(2+) as a cofactor.

Its subcellular location is the cytoplasm. The enzyme catalyses diphosphate + H2O = 2 phosphate + H(+). Functionally, catalyzes the hydrolysis of inorganic pyrophosphate (PPi) forming two phosphate ions. In Bradyrhizobium diazoefficiens (strain JCM 10833 / BCRC 13528 / IAM 13628 / NBRC 14792 / USDA 110), this protein is Inorganic pyrophosphatase.